A 104-amino-acid polypeptide reads, in one-letter code: Seminal ribonuclease (104 aa).

4 disulfide bridges follow: C12–C70, C26–C81, C44–C96, and C51–C58. Substrate-binding positions include 27-31, K52, and R71; that span reads KPVNT.

This sequence belongs to the pancreatic ribonuclease family. Homodimer; disulfide-linked.

It is found in the secreted. It catalyses the reaction an [RNA] containing cytidine + H2O = an [RNA]-3'-cytidine-3'-phosphate + a 5'-hydroxy-ribonucleotide-3'-[RNA].. It carries out the reaction an [RNA] containing uridine + H2O = an [RNA]-3'-uridine-3'-phosphate + a 5'-hydroxy-ribonucleotide-3'-[RNA].. This chain is Seminal ribonuclease (SRN), found in Saiga tatarica (Saiga antelope).